The sequence spans 110 residues: Large ribosomal subunit protein uL22 (110 aa).

This sequence belongs to the universal ribosomal protein uL22 family. As to quaternary structure, part of the 50S ribosomal subunit.

Functionally, this protein binds specifically to 23S rRNA; its binding is stimulated by other ribosomal proteins, e.g. L4, L17, and L20. It is important during the early stages of 50S assembly. It makes multiple contacts with different domains of the 23S rRNA in the assembled 50S subunit and ribosome. In terms of biological role, the globular domain of the protein is located near the polypeptide exit tunnel on the outside of the subunit, while an extended beta-hairpin is found that lines the wall of the exit tunnel in the center of the 70S ribosome. This Syntrophus aciditrophicus (strain SB) protein is Large ribosomal subunit protein uL22.